We begin with the raw amino-acid sequence, 654 residues long: MIVRLFWLAVLWLALANANPLKRLNHVWSQRGVAKDDFLVTSLPGLSENIASDDVPLMFAGQLELYPENNTHYFFWKFSDQKKEPEAANRTIFWLNGGPGCSSMDGALMEAGPLRIGKDYKVQLNEGSWHRKGDVVFVDQPAGTGFSYSRDYDVELYQIEYHFLQFLKKYFELFPEDAHNDIVLAGESYAGQYIPYIAHGILERNKKLADGESPYHLKGLAIGNGWISPNEQSLSFVPFAVQAGLVSQKDPGWKAILQQHMKCQDLVAASHEDDTFGANSVVDKECEKVLNTILYELVDHSASQYEQCINMYDYTLRDSFPSCGMNWPPDLSNVNHFLKSDEVMSSLNLVQQISWTECSEHVGKQMKARHSKPAITLFADLLAEVEILLFHGNRDIICNYMGAESMIKKLHWGGQTGFSADSPVLKWFHGDEEAGYVKSERNLTFVNVFDASHMVPFDKPEVSSALVDILFKRFTVADDKLQTQAKKTNANQNDSPSASENDNESGRTSESASSSPSESAATETESHATRIVRLIQLAVIIILIWGLCAIYSTYRSKPTSIIKTKPSGRKKNVQWADLMPQEEPAPKGFLSKTLNKLSRTEHKYVPVDIELGPTDGMDDASSDSGPSNVGTAETPEFVIASDDEENAHEHTEEH.

The first 18 residues, 1–18 (MIVRLFWLAVLWLALANA), serve as a signal peptide directing secretion. The Lumenal segment spans residues 19–533 (NPLKRLNHVW…TESHATRIVR (515 aa)). Asn-69 and Asn-89 each carry an N-linked (GlcNAc...) asparagine glycan. Residues Ser-188 and Asp-395 contribute to the active site. Asn-442 is a glycosylation site (N-linked (GlcNAc...) asparagine). His-453 is a catalytic residue. Residues 484 to 500 (QAKKTNANQNDSPSASE) are compositionally biased toward polar residues. Residues 484-526 (QAKKTNANQNDSPSASENDNESGRTSESASSSPSESAATETES) form a disordered region. Asn-503 is a glycosylation site (N-linked (GlcNAc...) asparagine). The span at 508–523 (TSESASSSPSESAATE) shows a compositional bias: low complexity. The helical transmembrane segment at 534–554 (LIQLAVIIILIWGLCAIYSTY) threads the bilayer. At 555–654 (RSKPTSIIKT…ENAHEHTEEH (100 aa)) the chain is on the cytoplasmic side. Residues 606 to 654 (PVDIELGPTDGMDDASSDSGPSNVGTAETPEFVIASDDEENAHEHTEEH) form a disordered region. Residues 622 to 631 (SDSGPSNVGT) are compositionally biased toward polar residues.

Belongs to the peptidase S10 family.

The protein localises to the golgi apparatus. It is found in the trans-Golgi network membrane. The catalysed reaction is Preferential release of a C-terminal arginine or lysine residue.. Functionally, protease with a carboxypeptidase B-like function involved in the C-terminal processing of the lysine and arginine residues from protein precursors. Promotes cell fusion and is involved in the programmed cell death. This chain is Pheromone-processing carboxypeptidase KEX1 (KEX1), found in Clavispora lusitaniae (strain ATCC 42720) (Yeast).